A 638-amino-acid polypeptide reads, in one-letter code: Threonine--tRNA ligase (638 aa).

The region spanning 1 to 61 (MPEITLPDGS…DNDSKVVIIT (61 aa)) is the TGS domain. The tract at residues 242-533 (DHRKLGKKHS…LIEQYEAKFP (292 aa)) is catalytic. Residues Cys-333, His-384, and His-510 each contribute to the Zn(2+) site.

This sequence belongs to the class-II aminoacyl-tRNA synthetase family. As to quaternary structure, homodimer. It depends on Zn(2+) as a cofactor.

It is found in the cytoplasm. The catalysed reaction is tRNA(Thr) + L-threonine + ATP = L-threonyl-tRNA(Thr) + AMP + diphosphate + H(+). In terms of biological role, catalyzes the attachment of threonine to tRNA(Thr) in a two-step reaction: L-threonine is first activated by ATP to form Thr-AMP and then transferred to the acceptor end of tRNA(Thr). Also edits incorrectly charged L-seryl-tRNA(Thr). The chain is Threonine--tRNA ligase from Prochlorococcus marinus subsp. pastoris (strain CCMP1986 / NIES-2087 / MED4).